The sequence spans 193 residues: ATP-dependent Clp protease proteolytic subunit (193 aa).

S98 acts as the Nucleophile in catalysis. The active site involves H123.

Belongs to the peptidase S14 family. As to quaternary structure, fourteen ClpP subunits assemble into 2 heptameric rings which stack back to back to give a disk-like structure with a central cavity, resembling the structure of eukaryotic proteasomes.

The protein localises to the cytoplasm. The catalysed reaction is Hydrolysis of proteins to small peptides in the presence of ATP and magnesium. alpha-casein is the usual test substrate. In the absence of ATP, only oligopeptides shorter than five residues are hydrolyzed (such as succinyl-Leu-Tyr-|-NHMec, and Leu-Tyr-Leu-|-Tyr-Trp, in which cleavage of the -Tyr-|-Leu- and -Tyr-|-Trp bonds also occurs).. In terms of biological role, cleaves peptides in various proteins in a process that requires ATP hydrolysis. Has a chymotrypsin-like activity. Plays a major role in the degradation of misfolded proteins. The protein is ATP-dependent Clp protease proteolytic subunit of Glaesserella parasuis serovar 5 (strain SH0165) (Haemophilus parasuis).